The chain runs to 334 residues: Protein NlpD/LppB homolog (334 aa).

The 45-residue stretch at 89-133 folds into the LysM domain; it reads IFYIVKSKDTMYSIAKNSGYNYHELSKFNSIKKPYKIIIGQKIWM.

It belongs to the E.coli NlpD/Haemophilus LppB family.

This is Protein NlpD/LppB homolog from Buchnera aphidicola subsp. Acyrthosiphon pisum (strain APS) (Acyrthosiphon pisum symbiotic bacterium).